Consider the following 232-residue polypeptide: Phosphatidylserine decarboxylase proenzyme (232 aa).

The active-site Schiff-base intermediate with substrate; via pyruvic acid is Ser-190. Ser-190 bears the Pyruvic acid (Ser); by autocatalysis mark.

It belongs to the phosphatidylserine decarboxylase family. PSD-A subfamily. As to quaternary structure, heterodimer of a large membrane-associated beta subunit and a small pyruvoyl-containing alpha subunit. It depends on pyruvate as a cofactor. In terms of processing, is synthesized initially as an inactive proenzyme. Formation of the active enzyme involves a self-maturation process in which the active site pyruvoyl group is generated from an internal serine residue via an autocatalytic post-translational modification. Two non-identical subunits are generated from the proenzyme in this reaction, and the pyruvate is formed at the N-terminus of the alpha chain, which is derived from the carboxyl end of the proenzyme. The post-translation cleavage follows an unusual pathway, termed non-hydrolytic serinolysis, in which the side chain hydroxyl group of the serine supplies its oxygen atom to form the C-terminus of the beta chain, while the remainder of the serine residue undergoes an oxidative deamination to produce ammonia and the pyruvoyl prosthetic group on the alpha chain.

It is found in the cell membrane. The enzyme catalyses a 1,2-diacyl-sn-glycero-3-phospho-L-serine + H(+) = a 1,2-diacyl-sn-glycero-3-phosphoethanolamine + CO2. It participates in phospholipid metabolism; phosphatidylethanolamine biosynthesis; phosphatidylethanolamine from CDP-diacylglycerol: step 2/2. Catalyzes the formation of phosphatidylethanolamine (PtdEtn) from phosphatidylserine (PtdSer). The polypeptide is Phosphatidylserine decarboxylase proenzyme (Bartonella henselae (strain ATCC 49882 / DSM 28221 / CCUG 30454 / Houston 1) (Rochalimaea henselae)).